The primary structure comprises 308 residues: tRNA uridine(34) hydroxylase (308 aa).

One can recognise a Rhodanese domain in the interval 128-222 (ADENTVVVDT…YLEEVPREQS (95 aa)). The active-site Cysteine persulfide intermediate is the cysteine 182.

Belongs to the TrhO family.

The enzyme catalyses uridine(34) in tRNA + AH2 + O2 = 5-hydroxyuridine(34) in tRNA + A + H2O. Catalyzes oxygen-dependent 5-hydroxyuridine (ho5U) modification at position 34 in tRNAs. The protein is tRNA uridine(34) hydroxylase of Brucella suis biovar 1 (strain 1330).